The chain runs to 315 residues: L-lactate dehydrogenase (315 aa).

NAD(+) is bound by residues V14, D35, Y67, and 81–82; that span reads GV. Substrate is bound by residues Q84, R91, and 123–126; that span reads NPVD. Residues 121–123 and S146 contribute to the NAD(+) site; that span reads ASN. Residue 151 to 154 participates in substrate binding; that stretch reads DSAR. H178 functions as the Proton acceptor in the catalytic mechanism. Y219 bears the Phosphotyrosine mark. T228 lines the substrate pocket.

Belongs to the LDH/MDH superfamily. LDH family. As to quaternary structure, homotetramer.

The protein resides in the cytoplasm. The enzyme catalyses (S)-lactate + NAD(+) = pyruvate + NADH + H(+). Its pathway is fermentation; pyruvate fermentation to lactate; (S)-lactate from pyruvate: step 1/1. Functionally, catalyzes the conversion of lactate to pyruvate. In Malacoplasma penetrans (strain HF-2) (Mycoplasma penetrans), this protein is L-lactate dehydrogenase.